Here is a 184-residue protein sequence, read N- to C-terminus: Structural protein V8 (184 aa).

The disordered stretch occupies residues 14 to 35 (IYNKSNTLTNTPSNPTGNTNTL).

This sequence belongs to the sputnik virus V6 family.

It localises to the virion. This Sputnik virophage protein is Structural protein V8.